A 1135-amino-acid polypeptide reads, in one-letter code: Retinoblastoma-like protein 2 (1135 aa).

A disordered region spans residues 1–43; the sequence is MASGGNQSSPPPPAAAASSEEEEEDGDTADRAQPAGSPSHQIQ. A Phosphoserine modification is found at Ser-410. At Thr-414 the chain carries Phosphothreonine. Positions 414-613 are domain A; the sequence is TPVSTATHSL…DRIRDNENRV (200 aa). The segment at 414 to 1021 is pocket; binds E1A; the sequence is TPVSTATHSL…QTFAMKYSQA (608 aa). Residue Ser-417 is glycosylated (O-linked (GlcNAc) serine). The interval 614–824 is spacer; sequence PTCEEVTPPH…QGQPLTSSSI (211 aa). Ser-636 bears the Phosphoserine mark. Position 639 is a phosphothreonine (Thr-639). 3 disordered regions span residues 649–698, 806–825, and 932–995; these read DAGG…PPQP, ISPG…SSIR, and RRNS…EEEE. The segment covering 656–674 has biased composition (polar residues); the sequence is SVTSPTTLYDRYSSPTVST. Residues Ser-659, Ser-669, and Ser-684 each carry the phosphoserine modification. Over residues 806 to 818 the composition is skewed to low complexity; sequence ISPGGQQQNQGQP. Residues 825-1021 are domain B; that stretch reads RPRKTSSLSL…QTFAMKYSQA (197 aa). Polar residues-rich tracts occupy residues 935–950 and 958–969; these read SGSC…PTEL and DSSPVMRSNSTL. Phosphoserine occurs at positions 942, 946, 960, 965, and 967. The residue at position 968 (Thr-968) is a Phosphothreonine. Pro residues predominate over residues 971-981; that stretch reads VPQPSSAPPTP. A phosphoserine mark is found at Ser-975 and Ser-976. The residue at position 980 (Thr-980) is a Phosphothreonine. Ser-1031, Ser-1064, Ser-1076, and Ser-1108 each carry phosphoserine.

This sequence belongs to the retinoblastoma protein (RB) family. As to quaternary structure, interacts with AATF, KMT5B and KMT5C. Component of the DREAM complex (also named LINC complex) at least composed of E2F4, E2F5, LIN9, LIN37, LIN52, LIN54, MYBL1, MYBL2, RBL1, RBL2, RBBP4, TFDP1 and TFDP2. The complex exists in quiescent cells where it represses cell cycle-dependent genes. It dissociates in S phase when LIN9, LIN37, LIN52 and LIN54 form a subcomplex that binds to MYBL2. Interacts with USP4. Part of the peroxisome proliferator activated receptor alpha (PPAR-alpha) interacting complex (PRIC). Interacts with RINT1. Interacts with PML. Interacts with RBBP9. Interacts with CD53. In terms of processing, during G0 and early G1 phase of the cell cycle, phosphorylated on Ser-636 and on 5 sites within the domain B. Phosphorylation on Ser-669 in G1 leads to its ubiquitin-dependent proteolysis.

Its subcellular location is the nucleus. Key regulator of entry into cell division. Directly involved in heterochromatin formation by maintaining overall chromatin structure and, in particular, that of constitutive heterochromatin by stabilizing histone methylation. Recruits and targets histone methyltransferases KMT5B and KMT5C, leading to epigenetic transcriptional repression. Controls histone H4 'Lys-20' trimethylation. Probably acts as a transcription repressor by recruiting chromatin-modifying enzymes to promoters. Potent inhibitor of E2F-mediated trans-activation, associates preferentially with E2F5. Binds to cyclins A and E. Binds to and may be involved in the transforming capacity of the adenovirus E1A protein. May act as a tumor suppressor. The protein is Retinoblastoma-like protein 2 (Rbl2) of Rattus norvegicus (Rat).